The primary structure comprises 666 residues: tRNA 5-methylaminomethyl-2-thiouridine biosynthesis bifunctional protein MnmC (666 aa).

The tRNA (mnm(5)s(2)U34)-methyltransferase stretch occupies residues 1-253 (MSSPFAPIIT…KRHMLCAYYE (253 aa)). The tract at residues 283–666 (VGGGLAGCFI…FLRKKIIQGP (384 aa)) is FAD-dependent cmnm(5)s(2)U34 oxidoreductase.

In the N-terminal section; belongs to the methyltransferase superfamily. tRNA (mnm(5)s(2)U34)-methyltransferase family. It in the C-terminal section; belongs to the DAO family. FAD serves as cofactor.

Its subcellular location is the cytoplasm. It catalyses the reaction 5-aminomethyl-2-thiouridine(34) in tRNA + S-adenosyl-L-methionine = 5-methylaminomethyl-2-thiouridine(34) in tRNA + S-adenosyl-L-homocysteine + H(+). Functionally, catalyzes the last two steps in the biosynthesis of 5-methylaminomethyl-2-thiouridine (mnm(5)s(2)U) at the wobble position (U34) in tRNA. Catalyzes the FAD-dependent demodification of cmnm(5)s(2)U34 to nm(5)s(2)U34, followed by the transfer of a methyl group from S-adenosyl-L-methionine to nm(5)s(2)U34, to form mnm(5)s(2)U34. The sequence is that of tRNA 5-methylaminomethyl-2-thiouridine biosynthesis bifunctional protein MnmC from Legionella pneumophila (strain Corby).